A 449-amino-acid polypeptide reads, in one-letter code: 3-phosphoshikimate 1-carboxyvinyltransferase (449 aa).

The segment at 1–29 (MSHDSVPSPITARAGTPLRGRLRPPGDKS) is disordered. Residues lysine 28, serine 29, and arginine 33 each contribute to the 3-phosphoshikimate site. Lysine 28 provides a ligand contact to phosphoenolpyruvate. Phosphoenolpyruvate-binding residues include glycine 101 and arginine 129. 3-phosphoshikimate contacts are provided by serine 175, glutamine 177, aspartate 330, and lysine 357. Residue glutamine 177 participates in phosphoenolpyruvate binding. Catalysis depends on aspartate 330, which acts as the Proton acceptor. Residues arginine 361 and arginine 405 each contribute to the phosphoenolpyruvate site.

This sequence belongs to the EPSP synthase family. As to quaternary structure, monomer.

It localises to the cytoplasm. The enzyme catalyses 3-phosphoshikimate + phosphoenolpyruvate = 5-O-(1-carboxyvinyl)-3-phosphoshikimate + phosphate. The protein operates within metabolic intermediate biosynthesis; chorismate biosynthesis; chorismate from D-erythrose 4-phosphate and phosphoenolpyruvate: step 6/7. In terms of biological role, catalyzes the transfer of the enolpyruvyl moiety of phosphoenolpyruvate (PEP) to the 5-hydroxyl of shikimate-3-phosphate (S3P) to produce enolpyruvyl shikimate-3-phosphate and inorganic phosphate. This is 3-phosphoshikimate 1-carboxyvinyltransferase from Methylobacterium sp. (strain 4-46).